Here is a 664-residue protein sequence, read N- to C-terminus: Macoilin-1 (664 aa).

A run of 4 helical transmembrane segments spans residues 28–48 (TFLY…DFVL), 75–95 (AFSV…LLFI), 120–140 (VCLP…AIRF), and 154–174 (FAAH…KSYV). Residues 206 to 225 (QMLQRQERETEEATSKGMSE) are disordered. A compositionally biased stretch (basic and acidic residues) spans 210-219 (RQERETEEAT). Residues Asn-234, Asn-336, Asn-339, Asn-348, and Asn-655 are each glycosylated (N-linked (GlcNAc...) asparagine). Disordered regions lie at residues 315-364 (VGAG…LAPH) and 644-664 (FMDT…PLKK). The span at 334–348 (SHNSTNGSVPSSSSN) shows a compositional bias: low complexity. Over residues 644–658 (FMDTSPSSLDPNASV) the composition is skewed to polar residues.

It belongs to the macoilin family.

The protein resides in the nucleus membrane. It is found in the rough endoplasmic reticulum membrane. Its function is as follows. May play a role in the regulation of neuronal activity. The polypeptide is Macoilin-1 (Danio rerio (Zebrafish)).